The chain runs to 410 residues: LL-diaminopimelate aminotransferase (410 aa).

Substrate contacts are provided by Tyr15 and Gly42. Residues Tyr72, 108-109, Tyr132, Asn187, Tyr218, and 246-248 each bind pyridoxal 5'-phosphate; these read AK and SFS. The substrate site is built by Lys109, Tyr132, and Asn187. At Lys249 the chain carries N6-(pyridoxal phosphate)lysine. Pyridoxal 5'-phosphate contacts are provided by Arg257 and Asn292. Residues Asn292 and Arg388 each coordinate substrate.

This sequence belongs to the class-I pyridoxal-phosphate-dependent aminotransferase family. LL-diaminopimelate aminotransferase subfamily. In terms of assembly, homodimer. Pyridoxal 5'-phosphate is required as a cofactor.

It carries out the reaction (2S,6S)-2,6-diaminopimelate + 2-oxoglutarate = (S)-2,3,4,5-tetrahydrodipicolinate + L-glutamate + H2O + H(+). Its pathway is amino-acid biosynthesis; L-lysine biosynthesis via DAP pathway; LL-2,6-diaminopimelate from (S)-tetrahydrodipicolinate (aminotransferase route): step 1/1. In terms of biological role, involved in the synthesis of meso-diaminopimelate (m-DAP or DL-DAP), required for both lysine and peptidoglycan biosynthesis. Catalyzes the direct conversion of tetrahydrodipicolinate to LL-diaminopimelate. Can also use m-DAP instead of LL-DAP as the amino-group donor. The sequence is that of LL-diaminopimelate aminotransferase from Acetivibrio thermocellus (strain ATCC 27405 / DSM 1237 / JCM 9322 / NBRC 103400 / NCIMB 10682 / NRRL B-4536 / VPI 7372) (Clostridium thermocellum).